A 359-amino-acid chain; its full sequence is tRNA-specific 2-thiouridylase MnmA (359 aa).

ATP-binding positions include 11–18 (GISGGVDS) and isoleucine 37. Cysteine 99 serves as the catalytic Nucleophile. A disulfide bond links cysteine 99 and cysteine 195. Glycine 123 lines the ATP pocket. The segment at 145–147 (KDQ) is interaction with tRNA. Residue cysteine 195 is the Cysteine persulfide intermediate of the active site. The tract at residues 304–305 (RY) is interaction with tRNA.

This sequence belongs to the MnmA/TRMU family.

Its subcellular location is the cytoplasm. It carries out the reaction S-sulfanyl-L-cysteinyl-[protein] + uridine(34) in tRNA + AH2 + ATP = 2-thiouridine(34) in tRNA + L-cysteinyl-[protein] + A + AMP + diphosphate + H(+). In terms of biological role, catalyzes the 2-thiolation of uridine at the wobble position (U34) of tRNA, leading to the formation of s(2)U34. In Chlorobium phaeobacteroides (strain BS1), this protein is tRNA-specific 2-thiouridylase MnmA.